The sequence spans 210 residues: Germin-like protein subfamily 3 member 4 (210 aa).

The first 18 residues, 1-18 (MKFFVVIVFCAIFLSVSG), serve as a signal peptide directing secretion. Cys-27 and Cys-44 are disulfide-bonded. A Cupin type-1 domain is found at 58-190 (TKLTEAGDTD…VFGIDQEHIK (133 aa)). Asn-73 carries an N-linked (GlcNAc...) asparagine glycan. Residues His-106, His-108, Glu-113, and His-152 each contribute to the Mn(2+) site.

It belongs to the germin family. In terms of assembly, oligomer (believed to be a pentamer but probably hexamer).

It is found in the secreted. Its subcellular location is the extracellular space. The protein resides in the apoplast. In terms of biological role, may play a role in plant defense. Probably has no oxalate oxidase activity even if the active site is conserved. The chain is Germin-like protein subfamily 3 member 4 from Arabidopsis thaliana (Mouse-ear cress).